The chain runs to 738 residues: Squalene hopane cyclase afumA (738 aa).

PFTB repeat units lie at residues 132–173 and 321–361; these read GSQY…RIIG and RRRC…KLHD. D460 (proton donor) is an active-site residue. 3 PFTB repeats span residues 482 to 523, 581 to 621, and 634 to 675; these read VRDA…ESLC, CARA…QYFK, and AARA…SQTA.

Belongs to the terpene cyclase/mutase family.

The protein operates within secondary metabolite biosynthesis. Functionally, squalene hopane cyclase; part of the gene cluster that mediates the biosynthesis fumihopaside A, a hopane-type glucoside that enhances the thermotolerance and UV resistance of N.fumigata. The first step of fumihopaside A biosynthesis is performed by the squalene hopane cyclase afumA that catalyzes the cyclization of 3S-oxidosqualene into the hopene 21-beta-H-hopane-3-beta,22-diol. The cytochrome P450 monooxygenase afumB is responsible for both hydroxylation at C-24 and oxidations at C-30 of the afumA product. The glycosyltransferase afumC then catalyzes the glycosylation at C-24, using UDP-D-glucose as a donor, to produce fumihopaside A. AfumC is also able to accept UDP-D-galactose and UDP-D-glucuronic acid as donors to yield minor derivatives. Fumihopaside B, another minor derivative produced, is different from fumihopaside A due to the presence of a double bond between C-22 and C-29. The protein is Squalene hopane cyclase afumA of Aspergillus fumigatus (strain CBS 144.89 / FGSC A1163 / CEA10) (Neosartorya fumigata).